Here is a 178-residue protein sequence, read N- to C-terminus: Large ribosomal subunit protein uL6 (178 aa).

This sequence belongs to the universal ribosomal protein uL6 family. Part of the 50S ribosomal subunit.

Functionally, this protein binds to the 23S rRNA, and is important in its secondary structure. It is located near the subunit interface in the base of the L7/L12 stalk, and near the tRNA binding site of the peptidyltransferase center. The chain is Large ribosomal subunit protein uL6 from Campylobacter curvus (strain 525.92).